A 344-amino-acid chain; its full sequence is UDP-3-O-acylglucosamine N-acyltransferase (344 aa).

The Proton acceptor role is filled by H248.

This sequence belongs to the transferase hexapeptide repeat family. LpxD subfamily. In terms of assembly, homotrimer.

The enzyme catalyses a UDP-3-O-[(3R)-3-hydroxyacyl]-alpha-D-glucosamine + a (3R)-hydroxyacyl-[ACP] = a UDP-2-N,3-O-bis[(3R)-3-hydroxyacyl]-alpha-D-glucosamine + holo-[ACP] + H(+). The protein operates within bacterial outer membrane biogenesis; LPS lipid A biosynthesis. Functionally, catalyzes the N-acylation of UDP-3-O-acylglucosamine using 3-hydroxyacyl-ACP as the acyl donor. Is involved in the biosynthesis of lipid A, a phosphorylated glycolipid that anchors the lipopolysaccharide to the outer membrane of the cell. This Synechocystis sp. (strain ATCC 27184 / PCC 6803 / Kazusa) protein is UDP-3-O-acylglucosamine N-acyltransferase.